Reading from the N-terminus, the 406-residue chain is Tyrosine--tRNA ligase (406 aa).

Residue tyrosine 35 participates in L-tyrosine binding. Residues 40-49 (PTADSLHIGH) carry the 'HIGH' region motif. L-tyrosine-binding residues include tyrosine 168 and glutamine 172. Positions 228–232 (KMGKT) match the 'KMSKS' region motif. Position 231 (lysine 231) interacts with ATP. Residues 340–406 (CSVVELLVDI…KKNYNRIIIK (67 aa)) form the S4 RNA-binding domain.

Belongs to the class-I aminoacyl-tRNA synthetase family. TyrS type 1 subfamily. In terms of assembly, homodimer.

Its subcellular location is the cytoplasm. It carries out the reaction tRNA(Tyr) + L-tyrosine + ATP = L-tyrosyl-tRNA(Tyr) + AMP + diphosphate + H(+). Its function is as follows. Catalyzes the attachment of tyrosine to tRNA(Tyr) in a two-step reaction: tyrosine is first activated by ATP to form Tyr-AMP and then transferred to the acceptor end of tRNA(Tyr). This Clostridium kluyveri (strain NBRC 12016) protein is Tyrosine--tRNA ligase.